We begin with the raw amino-acid sequence, 2113 residues long: Unconventional myosin-VIIb (2113 aa).

Residues 65–760 enclose the Myosin motor domain; it reads QGVDDMIRLG…QDTVLEIRRS (696 aa). ATP is bound at residue 158 to 165; sequence GESGAGKT. The interval 637-659 is actin-binding; the sequence is LDQLMRILTNCQPYFVRCIKPNE. IQ domains follow at residues 745 to 765, 763 to 792, 786 to 815, 809 to 838, 832 to 861, and 855 to 884; these read IFLKDHQDTVLEIRRSQALDG, LDGAAIRIQRVLRGHKYRKEFLRQRRAAVT, QRRAAVTLQAGWRGYSQRKNFKLILVGFER, ILVGFERLQAIARSHLLMRQFQAMRQRIVQ, MRQRIVQLQARCRGYLVRQQVQAKRRAVVI, and KRRAVVIIQAHARGMVVRKSYWQQKSTGPQ. Position 904 is a phosphoserine (serine 904). Residues 962 to 1578 form a mediates interaction with ANKS4B region; the sequence is EEEVDSLAEY…STQLLSLLAM (617 aa). A MyTH4 1 domain is found at 989–1189; it reads HIQKPLRYPL…PTWLELQAVK (201 aa). Residues 1194–1503 form the FERM 1 domain; sequence IPIQVILATG…GGLKERSVFA (310 aa). Position 1339 is a phosphothreonine (threonine 1339). Position 1368 is a phosphoserine (serine 1368). Residues 1497–2113 form a mediates interaction with CDHR2, CDHR5 and USH1C region; it reads KERSVFAMAL…GFRAPAPANP (617 aa). The SH3 domain maps to 1498–1564; that stretch reads ERSVFAMALQ…PTACLYTIPS (67 aa). 2 MyTH4 domains span residues 1641–1790 and 1790–1896; these read YSPE…KAAE and EQNV…LNVT. Serine 1642 carries the phosphoserine modification. Residues 1796 to 2099 form the FERM 2 domain; it reads LHHEVYLPND…SYVQQLLNTV (304 aa).

The protein belongs to the TRAFAC class myosin-kinesin ATPase superfamily. Myosin family. In terms of assembly, part of the IMAC/intermicrovillar adhesion complex/intermicrovillar tip-link complex composed of ANKS4B, MYO7B, USH1C, CDHR2 and CDHR5. Interacts with CDHR2. Interacts with CDHR5. Interacts with USH1C. Interacts with ANKS4B; requires initial interaction with USH1C. Interacts with CALML4; the interaction mediates the association of CALML4 with the IMAC/intermicrovillar adhesion complex. As to expression, expressed primarily in kidney and intestine. Detected in proximal tubule cells of the kidney and enterocytes of the intestine, specifically the distal tips of apical microvilli on these transporting epithelial cells (at protein level).

Its subcellular location is the cytoplasm. It localises to the cytoskeleton. It is found in the cell projection. The protein localises to the microvillus. Its function is as follows. Myosins are actin-based motor molecules with ATPase activity. Their highly divergent tails are presumed to bind to membranous compartments, which would be moved relative to actin filaments. As part of the intermicrovillar adhesion complex/IMAC plays a role in epithelial brush border differentiation, controlling microvilli organization and length. May link the complex to the actin core bundle of microvilli. This chain is Unconventional myosin-VIIb (Myo7b), found in Mus musculus (Mouse).